The sequence spans 118 residues: Large ribosomal subunit protein bL19 (118 aa).

It belongs to the bacterial ribosomal protein bL19 family.

This protein is located at the 30S-50S ribosomal subunit interface and may play a role in the structure and function of the aminoacyl-tRNA binding site. This Citrifermentans bemidjiense (strain ATCC BAA-1014 / DSM 16622 / JCM 12645 / Bem) (Geobacter bemidjiensis) protein is Large ribosomal subunit protein bL19.